We begin with the raw amino-acid sequence, 387 residues long: Eukaryotic translation initiation factor 3 subunit M (387 aa).

The region spanning 181–340 (LSSKVMIELL…RKVHISSTMH (160 aa)) is the PCI domain.

It belongs to the eIF-3 subunit M family. In terms of assembly, component of the eukaryotic translation initiation factor 3 (eIF-3) complex. The eIF-3 complex interacts with pix.

It localises to the cytoplasm. Its subcellular location is the golgi apparatus. Its function is as follows. Component of the eukaryotic translation initiation factor 3 (eIF-3) complex, which is involved in protein synthesis of a specialized repertoire of mRNAs and, together with other initiation factors, stimulates binding of mRNA and methionyl-tRNAi to the 40S ribosome. The eIF-3 complex specifically targets and initiates translation of a subset of mRNAs involved in cell proliferation. The chain is Eukaryotic translation initiation factor 3 subunit M from Drosophila ananassae (Fruit fly).